A 482-amino-acid chain; its full sequence is E1B 55 kDa protein (482 aa).

Residues valine 73–serine 94 are disordered. Basic and acidic residues predominate over residues alanine 83–serine 94. Phosphoserine is present on residues serine 476 and serine 477.

Belongs to the adenoviridae E1B 55 kDa protein family. As to quaternary structure, interacts with host PML-4 and PML-5; this interaction promotes efficient subnuclear targeting of E1B-55K to PML nuclear bodies. Interacts with E4-ORF3 protein. Interacts with E4-ORF6 protein.

It localises to the host nucleus. It is found in the host cytoplasm. Its function is as follows. Plays a major role to prevent cellular inhibition of viral genome replication. Assembles an SCF-like E3 ubiquitin ligase complex based on the cellular proteins ELOB, ELOC, CUL5 and RBX1, in cooperation with viral E4orf6. This viral RING-type ligase ubiquitinates cellular substrates and targets them to proteasomal degradation: TP53/p53, LIG4, MRE11-RAD50-NBS1 (MRN) complex, ITGA3, DAXX and BLM. E1B-55K probably acts as the substrate-specific adapter of the SCF-like E3 ubiquitin ligase complex. Degradation of host TP53/p53 activity is essential for preventing E1A-induced TP53 accumulation that would otherwise lead to cell apoptosis and growth arrest. E1B-55K also inactivates TP53 transcription-factor activity by binding its transactivation domain. E1B-55K also functions as a SUMO1 E3 ligase for TP53 which causes the latter to be sequestered in promyelocytic leukemia (PML) nuclear bodies thereby contributing to maximal inhibition of TP53 function. In Homo sapiens (Human), this protein is E1B 55 kDa protein.